Here is a 222-residue protein sequence, read N- to C-terminus: Lipid A 4'-phosphatase (222 aa).

The Cytoplasmic portion of the chain corresponds to 1–3; it reads MAR. Residues 4-24 traverse the membrane as a helical segment; that stretch reads FHIILGLVVCFFAWIFFLIFP. At 25–58 the chain is on the periplasmic side; sequence NLDIQFAGHFYNSSAHQFIGGYDGFLGFLHWFAR. A helical membrane pass occupies residues 59-79; it reads FFPIFFSIIVILFLLGSLFID. The Cytoplasmic portion of the chain corresponds to 80–87; sequence KFKIKYRK. Residues 88–108 form a helical membrane-spanning segment; that stretch reads AIFFIAVCLWIGPGLVVNYVF. Residues 109 to 144 are Periplasmic-facing; sequence KDHWGRPRPVMVEQFNGDKIFQPPFVISSQCDKNCS. A helical membrane pass occupies residues 145–165; the sequence is FVCGDASMGFWLFAFMPLLAT. Residues 166–169 are Cytoplasmic-facing; the sequence is RKKK. The helical transmembrane segment at 170-190 threads the bilayer; the sequence is LVAFIAAVVAGGGLGLMRMSQ. Residues 191 to 193 are Periplasmic-facing; sequence GGH. Residues 194–214 traverse the membrane as a helical segment; it reads FFSDVVFCGIFVYISTWVVYA. The Cytoplasmic segment spans residues 215-222; it reads LMYRKKEY.

The protein belongs to the lipid A LpxF 4'-phosphatase family.

The protein resides in the cell inner membrane. The protein operates within bacterial outer membrane biogenesis; LPS lipid A biosynthesis. In terms of biological role, removes the 4'-phosphate moiety from lipid IV(A) (a tetraacylated precursor of lipid A) and from pentaacylated lipid A, but not from hexaacylated lipid A (as is found in E.coli). Does not dephosphorylate phosphatidic acid, phosphatidylglycerophosphate, or the 1-phosphate group of lipid A and lipid A precursors. Its expression in E.coli confers resistance to the cationic antimicrobial peptide (CAMP) polymyxin B. Plays a critical role in the ability of the bacteria to avoid the host's innate immune system, especially the bactericidal action of CAMPs, although whether it is CAMP-sensitivity or increased sensitivity to the immune system is not clear. The protein is Lipid A 4'-phosphatase of Francisella tularensis subsp. novicida (strain U112).